A 377-amino-acid polypeptide reads, in one-letter code: Nitric oxide reductase FlRd-NAD(+) reductase (377 aa).

It belongs to the FAD-dependent oxidoreductase family. The cofactor is FAD.

It is found in the cytoplasm. It carries out the reaction 2 reduced [nitric oxide reductase rubredoxin domain] + NAD(+) + H(+) = 2 oxidized [nitric oxide reductase rubredoxin domain] + NADH. The protein operates within nitrogen metabolism; nitric oxide reduction. Its function is as follows. One of at least two accessory proteins for anaerobic nitric oxide (NO) reductase. Reduces the rubredoxin moiety of NO reductase. The protein is Nitric oxide reductase FlRd-NAD(+) reductase of Salmonella paratyphi A (strain AKU_12601).